The primary structure comprises 360 residues: Phospho-N-acetylmuramoyl-pentapeptide-transferase (360 aa).

10 helical membrane-spanning segments follow: residues 25-45, 73-93, 97-117, 132-152, 167-187, 199-219, 236-256, 263-283, 288-308, and 338-358; these read RGIL…PWMI, TMGG…WADL, YVWT…VDDY, WKYF…YMTA, TIEI…IVGS, GLAI…CYLS, AGEL…FLWF, VFMG…IAVI, VVLF…MIQV, and VIVR…ATLK.

This sequence belongs to the glycosyltransferase 4 family. MraY subfamily. It depends on Mg(2+) as a cofactor.

The protein resides in the cell inner membrane. The enzyme catalyses UDP-N-acetyl-alpha-D-muramoyl-L-alanyl-gamma-D-glutamyl-meso-2,6-diaminopimeloyl-D-alanyl-D-alanine + di-trans,octa-cis-undecaprenyl phosphate = di-trans,octa-cis-undecaprenyl diphospho-N-acetyl-alpha-D-muramoyl-L-alanyl-D-glutamyl-meso-2,6-diaminopimeloyl-D-alanyl-D-alanine + UMP. It participates in cell wall biogenesis; peptidoglycan biosynthesis. Its function is as follows. Catalyzes the initial step of the lipid cycle reactions in the biosynthesis of the cell wall peptidoglycan: transfers peptidoglycan precursor phospho-MurNAc-pentapeptide from UDP-MurNAc-pentapeptide onto the lipid carrier undecaprenyl phosphate, yielding undecaprenyl-pyrophosphoryl-MurNAc-pentapeptide, known as lipid I. The protein is Phospho-N-acetylmuramoyl-pentapeptide-transferase of Azotobacter vinelandii (strain DJ / ATCC BAA-1303).